Reading from the N-terminus, the 215-residue chain is Large ribosomal subunit protein uL3 (215 aa).

The tract at residues 136–155 is disordered; sequence GVSISHRSHGSTGQRQDPGK. The residue at position 151 (Gln-151) is an N5-methylglutamine.

Belongs to the universal ribosomal protein uL3 family. Part of the 50S ribosomal subunit. Forms a cluster with proteins L14 and L19. Post-translationally, methylated by PrmB.

One of the primary rRNA binding proteins, it binds directly near the 3'-end of the 23S rRNA, where it nucleates assembly of the 50S subunit. The sequence is that of Large ribosomal subunit protein uL3 from Rickettsia canadensis (strain McKiel).